We begin with the raw amino-acid sequence, 274 residues long: Merozoite surface protein 2 (274 aa).

A signal peptide spans 1–20; it reads MKVIKTLSIINFFIFVTFNI. Asparagine 22 and asparagine 36 each carry an N-linked (GlcNAc...) asparagine glycan. The interval 43 to 234 is disordered; the sequence is MAESKPPTGT…SDSQKECTDG (192 aa). Positions 44-200 are polymorphic region; sequence AESKPPTGTG…EQTESPELQS (157 aa). Repeat copies occupy residues 53 to 62 and 63 to 72. A 2 X 10 AA tandem repeats of G-A-S-G-S-A-G-S-G-[AD] region spans residues 53–72; it reads GASGSAGSGAGASGSAGSGD. The span at 53-72 shows a compositional bias: gly residues; the sequence is GASGSAGSGAGASGSAGSGD. The span at 91–121 shows a compositional bias: low complexity; it reads SSSTPATTTTTTTTTTTTTTNDAEASTSTSS. Composition is skewed to polar residues over residues 122–131, 140–167, and 174–202; these read ENPNHNNAET, QKSN…NVPP, and KSPT…QSAP. Asparagine 151 carries N-linked (GlcNAc...) asparagine glycosylation. Asparagine 223 carries N-linked (GlcNAc...) asparagine glycosylation. A disulfide bond links cysteine 231 and cysteine 239. Asparagine 248 carries an N-linked (GlcNAc...) asparagine glycan. Asparagine 248 carries GPI-anchor amidated asparagine lipidation. Residues 249-274 constitute a propeptide, removed in mature form; the sequence is SSNIASINKFVVLISAKLVLSFAIFI.

Its subcellular location is the cell membrane. May play a role in the merozoite attachment to the erythrocyte. The chain is Merozoite surface protein 2 from Plasmodium falciparum (isolate kf1916).